A 344-amino-acid chain; its full sequence is Heme A synthase (344 aa).

9 helical membrane-spanning segments follow: residues 20–40 (IAWW…VGGL), 104–124 (RFLG…FVVT), 135–155 (LIFL…MVMS), 170–190 (AHLG…LDLL), 205–225 (AAAI…VAGI), 233–253 (TWPL…TPVW), 265–285 (FQHR…WWAA), 296–316 (WLAV…LWVV), and 317–337 (PIPL…VAVW). Histidine 267 lines the heme pocket. Histidine 324 contacts heme.

Belongs to the COX15/CtaA family. Type 2 subfamily. Interacts with CtaB. Requires heme b as cofactor.

It localises to the cell membrane. It carries out the reaction Fe(II)-heme o + 2 A + H2O = Fe(II)-heme a + 2 AH2. It participates in porphyrin-containing compound metabolism; heme A biosynthesis; heme A from heme O: step 1/1. In terms of biological role, catalyzes the conversion of heme O to heme A by two successive hydroxylations of the methyl group at C8. The first hydroxylation forms heme I, the second hydroxylation results in an unstable dihydroxymethyl group, which spontaneously dehydrates, resulting in the formyl group of heme A. This is Heme A synthase from Parvibaculum lavamentivorans (strain DS-1 / DSM 13023 / NCIMB 13966).